Reading from the N-terminus, the 146-residue chain is Hemoglobin subunit beta (146 aa).

V1 carries the N-acetylvaline modification. A Globin domain is found at 2-146 (HLTGEEKSAV…VANALAHKYH (145 aa)). T12 is subject to Phosphothreonine. S44 carries the phosphoserine modification. Residue K59 is modified to N6-acetyllysine. Residue H63 coordinates heme b. N6-acetyllysine is present on K82. A heme b-binding site is contributed by H92. C93 carries the S-nitrosocysteine modification. At K144 the chain carries N6-acetyllysine.

This sequence belongs to the globin family. Heterotetramer of two alpha chains and two beta chains. In terms of tissue distribution, red blood cells.

Its function is as follows. Involved in oxygen transport from the lung to the various peripheral tissues. The chain is Hemoglobin subunit beta (HBB) from Mico argentatus (Silvery marmoset).